We begin with the raw amino-acid sequence, 274 residues long: Methylamine utilization protein MauF (274 aa).

The next 7 membrane-spanning stretches (helical) occupy residues 30–50 (WTRALILAASAAGGGAAALAM), 52–72 (AAHVALVLGLAAFAGGLLSTW), 105–125 (LGYALGALILGTLLGAIGGIA), 127–147 (LSGFATSFGLGLLAVIGLAYG), 176–196 (WVVGGLYGLSLGLDYLTYVQT), 202–222 (VTAAAVLSGNVAEAVALIAIF), and 253–273 (AAIADGAILTAVGAAFAMLAL).

The protein resides in the cell membrane. The protein operates within one-carbon metabolism; methylamine degradation. This Paracoccus versutus (Thiobacillus versutus) protein is Methylamine utilization protein MauF (mauF).